A 176-amino-acid polypeptide reads, in one-letter code: MDLPGPIHDILLVFLGSGLILGGLGVVLLTNPISSAFSLGLVLVCISLFYIPSNSYFVAAAQLLIYVGAINVLIVFAVMFMNGSEYYNDFHLWTIGDGFTSLVCTSILFSLITTIPDTSWYGIIWTTRSNQIIEQDLTSNVQQIGIHLSTDFYLPFELISIILLVALIGAIAMARQ.

Helical transmembrane passes span 10-30 (ILLV…VLLT), 32-52 (PISS…FYIP), 61-81 (AQLL…VMFM), 92-112 (LWTI…FSLI), and 152-172 (FYLP…GAIA).

The protein belongs to the complex I subunit 6 family. NDH is composed of at least 16 different subunits, 5 of which are encoded in the nucleus.

It localises to the plastid. The protein resides in the chloroplast thylakoid membrane. It carries out the reaction a plastoquinone + NADH + (n+1) H(+)(in) = a plastoquinol + NAD(+) + n H(+)(out). The catalysed reaction is a plastoquinone + NADPH + (n+1) H(+)(in) = a plastoquinol + NADP(+) + n H(+)(out). NDH shuttles electrons from NAD(P)H:plastoquinone, via FMN and iron-sulfur (Fe-S) centers, to quinones in the photosynthetic chain and possibly in a chloroplast respiratory chain. The immediate electron acceptor for the enzyme in this species is believed to be plastoquinone. Couples the redox reaction to proton translocation, and thus conserves the redox energy in a proton gradient. The sequence is that of NAD(P)H-quinone oxidoreductase subunit 6, chloroplastic (ndhG) from Chloranthus spicatus (Chulantree).